We begin with the raw amino-acid sequence, 213 residues long: Thiamine-phosphate synthase (213 aa).

Residues 38-42 (QLRIK) and N70 each bind 4-amino-2-methyl-5-(diphosphooxymethyl)pyrimidine. Residues D71 and D90 each coordinate Mg(2+). S109 contacts 4-amino-2-methyl-5-(diphosphooxymethyl)pyrimidine. 135 to 137 (TQT) is a 2-[(2R,5Z)-2-carboxy-4-methylthiazol-5(2H)-ylidene]ethyl phosphate binding site. K138 serves as a coordination point for 4-amino-2-methyl-5-(diphosphooxymethyl)pyrimidine. Residues G168 and 188–189 (VS) contribute to the 2-[(2R,5Z)-2-carboxy-4-methylthiazol-5(2H)-ylidene]ethyl phosphate site.

It belongs to the thiamine-phosphate synthase family. The cofactor is Mg(2+).

The enzyme catalyses 2-[(2R,5Z)-2-carboxy-4-methylthiazol-5(2H)-ylidene]ethyl phosphate + 4-amino-2-methyl-5-(diphosphooxymethyl)pyrimidine + 2 H(+) = thiamine phosphate + CO2 + diphosphate. The catalysed reaction is 2-(2-carboxy-4-methylthiazol-5-yl)ethyl phosphate + 4-amino-2-methyl-5-(diphosphooxymethyl)pyrimidine + 2 H(+) = thiamine phosphate + CO2 + diphosphate. It catalyses the reaction 4-methyl-5-(2-phosphooxyethyl)-thiazole + 4-amino-2-methyl-5-(diphosphooxymethyl)pyrimidine + H(+) = thiamine phosphate + diphosphate. It functions in the pathway cofactor biosynthesis; thiamine diphosphate biosynthesis; thiamine phosphate from 4-amino-2-methyl-5-diphosphomethylpyrimidine and 4-methyl-5-(2-phosphoethyl)-thiazole: step 1/1. Its function is as follows. Condenses 4-methyl-5-(beta-hydroxyethyl)thiazole monophosphate (THZ-P) and 2-methyl-4-amino-5-hydroxymethyl pyrimidine pyrophosphate (HMP-PP) to form thiamine monophosphate (TMP). This chain is Thiamine-phosphate synthase, found in Pectobacterium atrosepticum (strain SCRI 1043 / ATCC BAA-672) (Erwinia carotovora subsp. atroseptica).